We begin with the raw amino-acid sequence, 203 residues long: Transmembrane emp24 domain-containing protein (203 aa).

The signal sequence occupies residues 1–22; the sequence is MASIRLLPSCIVLMFLARSSLC. The Lumenal segment spans residues 23-170; sequence YFITIDAHGE…RSINDNTNSR (148 aa). Positions 32–114 constitute a GOLD domain; sequence EECFHDKVTS…PKVLKFSMDI (83 aa). The helical transmembrane segment at 171-191 threads the bilayer; that stretch reads VVWWSFFESLVLVAMTLGQVY. Residues 192–203 are Cytoplasmic-facing; that stretch reads YLKRFFEVRRVV.

The protein belongs to the EMP24/GP25L family.

The protein resides in the cytoplasmic vesicle membrane. Its function is as follows. Could have a role in the budding of coatomer-coated and other species of coated vesicles. The sequence is that of Transmembrane emp24 domain-containing protein from Nematostella vectensis (Starlet sea anemone).